Consider the following 715-residue polypeptide: Scinderin (715 aa).

The interval 1-363 (MARELYHEEF…DGFGKVYVTE (363 aa)) is actin-severing. Residues 27–76 (LELVPVPQSAHGDFYVGDAYLVLHTAKTSRGFTYHLHFWLGKECSQDEST) form a Gelsolin-like 1 repeat. At Y102 the chain carries Phosphotyrosine. Residues 112–119 (KGGLKYKA) and 138–146 (RLLHVKGRR) each bind a 1,2-diacyl-sn-glycero-3-phospho-(1D-myo-inositol-4,5-bisphosphate). Gelsolin-like repeat units lie at residues 148 to 188 (VRAT…YERL), 265 to 307 (VVAE…QERK), 398 to 451 (VEIW…DELT), and 523 to 564 (TRIV…EEEK). The segment at 364–715 (KVAQIKQIPF…WFLGWDSSKW (352 aa)) is ca(2+)-dependent actin binding. Ca(2+) is bound by residues N538, D539, and E562. Y599 carries the phosphotyrosine modification. One copy of the Gelsolin-like 6 repeat lies at 626–668 (FVIEEIPGEFTQDDLAEDDVMLLDAWEQIFIWIGKDANEVEKK). The Ca(2+) site is built by D643, D644, and E666.

The protein belongs to the villin/gelsolin family. In terms of tissue distribution, expressed in megakaryocytes.

The protein localises to the cytoplasm. It localises to the cytoskeleton. The protein resides in the cell projection. Its subcellular location is the podosome. Its function is as follows. Ca(2+)-dependent actin filament-severing protein that has a regulatory function in exocytosis by affecting the organization of the microfilament network underneath the plasma membrane. Severing activity is inhibited by phosphatidylinositol 4,5-bis-phosphate (PIP2). In vitro, also has barbed end capping and nucleating activities in the presence of Ca(2+). Required for megakaryocyte differentiation, maturation, polyploidization and apoptosis with the release of platelet-like particles. Plays a role in osteoclastogenesis (OCG) and actin cytoskeletal organization in osteoclasts. Regulates chondrocyte proliferation and differentiation. Inhibits cell proliferation and tumorigenesis. Signaling is mediated by MAPK, p38 and JNK pathways. In Homo sapiens (Human), this protein is Scinderin.